Here is a 216-residue protein sequence, read N- to C-terminus: Thiopurine S-methyltransferase (216 aa).

4 residues coordinate S-adenosyl-L-methionine: Trp10, Leu45, Glu66, and Arg123.

This sequence belongs to the class I-like SAM-binding methyltransferase superfamily. TPMT family.

The protein localises to the cytoplasm. It carries out the reaction S-adenosyl-L-methionine + a thiopurine = S-adenosyl-L-homocysteine + a thiopurine S-methylether.. In Pseudomonas entomophila (strain L48), this protein is Thiopurine S-methyltransferase.